Here is a 277-residue protein sequence, read N- to C-terminus: uncharacterized protein (277 aa).

Disordered stretches follow at residues 1–103 and 254–277; these read PPLR…LEDP and PSPSSAPHATSRRPHTQLQVSPPR. Residues 48–65 show a composition bias toward basic and acidic residues; it reads RRNDTGKDRGTHRQRAET. The span at 66–77 shows a compositional bias: polar residues; the sequence is PSRSPVPTTNTV. A compositionally biased stretch (basic residues) spans 82 to 91; it reads PAVRRQRRTQ.

This is an uncharacterized protein from Homo sapiens (Human).